Reading from the N-terminus, the 71-residue chain is Augerpeptide-s7a (71 aa).

A signal peptide spans 1 to 20; that stretch reads MSALKFVLICGLVLLLIETI. A propeptide spanning residues 21–29 is cleaved from the precursor; sequence PGVSLNLMR. 3 disulfide bridges follow: cysteine 36-cysteine 48, cysteine 42-cysteine 65, and cysteine 47-cysteine 68.

In terms of tissue distribution, expressed by the venom duct.

It is found in the secreted. In terms of biological role, elicits an uncoordinated twisting syndrome when injected into C.elegans, but has no effect on mice. The protein is Augerpeptide-s7a of Terebra subulata (Chocolate spotted auger).